A 609-amino-acid polypeptide reads, in one-letter code: MRVLYIHAERFTWDVKDPASDIRDEPISGKANNALVIFATVERGDIPDEGFLRQIARDIIDVANKVKASSIVIYPYAHLSSELARPYVAREVLNKLYEVVKSEFHGEVYKAPFGYYKAFEIKCFGHPLSELSRSFKPEGAKVEKKVEERRDVYIVLTPSGEEYNPADFNYDKFEDLKALVDKEVFKKELSGGSEPRYLDYLRKFGFEWESMSDVGHMRYAPEATIMIELVEDYAYMVAKSLGIPVFKIRGTNMFKLSETAIESHARLFGERLYVVESDTDLILRYAACFQQFAMVKDWVISYKHLPFGVIEIADSYRHEQPGETVLLFRLRRFFMPDLHIFTRDMAEAIDISFKLHEVIFREIEKLGRTYVSLYNVTEEFYKEYKNYLIELAKREGKPILVRILPGQKYYWVLNVEFHIIDELGRPREIATFQIDIGNAKRFGIKYVDENNQVRYPVIIHTAILGSVERYLYVVFDTMAKAEKAGKIPRLPTWLSPVQVRIIPITRDNLKYAVEIADKLETEGIRVDIDDRDETLSKKIRDAEVSWIPYICVVGSKEETEGVLSVRERGGGQYKTTPEELIKKIKEETRGYPNRPLYMPRFLSQRPSRG.

The segment at 1-143 (MRVLYIHAER…SFKPEGAKVE (143 aa)) is editing domain. Catalytic regions lie at residues 195 to 491 (PRYL…PRLP) and 196 to 491 (RYLD…PRLP). Residues Cys-288, His-339, and His-460 each contribute to the Zn(2+) site.

Belongs to the class-II aminoacyl-tRNA synthetase family. In terms of assembly, homodimer. It depends on Zn(2+) as a cofactor.

Its subcellular location is the cytoplasm. It carries out the reaction tRNA(Thr) + L-threonine + ATP = L-threonyl-tRNA(Thr) + AMP + diphosphate + H(+). Functionally, catalyzes the attachment of threonine to tRNA(Thr) in a two-step reaction: L-threonine is first activated by ATP to form Thr-AMP and then transferred to the acceptor end of tRNA(Thr). Also edits incorrectly charged L-seryl-tRNA(Thr). In Pyrobaculum islandicum (strain DSM 4184 / JCM 9189 / GEO3), this protein is Threonine--tRNA ligase.